The primary structure comprises 548 residues: MKALERVYVIGHKNPDTDSVCSAIGYAHFKNNVEKGKTFIPARSGDLTNESLFVLKYFGMNPPLHIETLEPTVEDLELKNPIFVTPDTSAYDVAMLMESRGIKNVPVVSKEKMIGVVTESNIARVYVRRLKIEPLVIHPVPFDQLVRILKAEVVCDYMKEKTVSGKVHIAVDALHVLLGKIEIGDVVIVGDNEPAQIALLEKGAKLMIVVNNAPVSNRVLEIAKEKNAAVLRVKFDAFSAAKLINLSLPVTLVMSKKFPTVTKKDTLEEVKEIVFTSKIRAAFVEDEKGRLCGVITRTDLLKDVRKKVILVDHNEITQAPEGVEKAEILEIIDHHRLGGLSTLNPVFFYNEPVGSTSTIVAEFFLKNGVKMEREIAGILLSGIVSDTLFFKLSTTTEKDRKMANFLADVAKLDLEKFAKKLLKEGMKIPEDVDPAELLKRDVKVYEMGEESFAVSQIMTSDFSTLLKEKERFMNTLKTLKGEFGVKHFFVLFTNPVEEASLLMMDGDQKLVEKAFNAEKKDGLFLLKGVMSRKKDFVPKIGEVLRRER.

The tract at residues 1-74 (MKALERVYVI…HIETLEPTVE (74 aa)) is PPase part 1. Mn(2+)-binding residues include His12, Asp16, and Asp18. 2 consecutive CBS domains span residues 77-132 (ELKN…RLKI) and 254-311 (MSKK…VILV). Residues 306 to 548 (KKVILVDHNE…KIGEVLRRER (243 aa)) form a PPase part 2 region. Residues Asp312, His334, and Asp386 each contribute to the Mn(2+) site.

The protein belongs to the PPase class C family. Requires Mn(2+) as cofactor.

The protein localises to the cytoplasm. The catalysed reaction is diphosphate + H2O = 2 phosphate + H(+). The protein is Probable manganese-dependent inorganic pyrophosphatase (ppaC) of Thermotoga maritima (strain ATCC 43589 / DSM 3109 / JCM 10099 / NBRC 100826 / MSB8).